The following is a 232-amino-acid chain: Ribonuclease P protein component 3 (232 aa).

Belongs to the eukaryotic/archaeal RNase P protein component 3 family. As to quaternary structure, consists of a catalytic RNA component and at least 4-5 protein subunits.

It localises to the cytoplasm. The catalysed reaction is Endonucleolytic cleavage of RNA, removing 5'-extranucleotides from tRNA precursor.. Functionally, part of ribonuclease P, a protein complex that generates mature tRNA molecules by cleaving their 5'-ends. This Halobacterium salinarum (strain ATCC 29341 / DSM 671 / R1) protein is Ribonuclease P protein component 3.